The following is a 1193-amino-acid chain: DNA-directed RNA polymerase subunit beta (1193 aa).

The segment covering 1149–1162 (EEEIEMRDLEDEED) has biased composition (acidic residues). The segment at 1149 to 1193 (EEEIEMRDLEDEEDAKQADGLALSGDEEPEETASADVERDVVTKE) is disordered. The span at 1184–1193 (DVERDVVTKE) shows a compositional bias: basic and acidic residues.

It belongs to the RNA polymerase beta chain family. As to quaternary structure, RNAP is composed of a core of 2 alpha, a beta and a beta' subunit. The core is associated with a delta subunit, and at least one of epsilon or omega. When a sigma factor is associated with the core the holoenzyme is formed, which can initiate transcription.

It catalyses the reaction RNA(n) + a ribonucleoside 5'-triphosphate = RNA(n+1) + diphosphate. DNA-dependent RNA polymerase catalyzes the transcription of DNA into RNA using the four ribonucleoside triphosphates as substrates. This Bacillus subtilis (strain 168) protein is DNA-directed RNA polymerase subunit beta.